Here is a 108-residue protein sequence, read N- to C-terminus: Large ribosomal subunit protein uL24 (108 aa).

It belongs to the universal ribosomal protein uL24 family. Part of the 50S ribosomal subunit.

Its function is as follows. One of two assembly initiator proteins, it binds directly to the 5'-end of the 23S rRNA, where it nucleates assembly of the 50S subunit. Functionally, one of the proteins that surrounds the polypeptide exit tunnel on the outside of the subunit. The polypeptide is Large ribosomal subunit protein uL24 (Geobacter sulfurreducens (strain ATCC 51573 / DSM 12127 / PCA)).